The sequence spans 152 residues: Deoxyuridine 5'-triphosphate nucleotidohydrolase (152 aa).

Substrate is bound by residues 71–73 (RSG), N84, 88–90 (LID), and M98.

Belongs to the dUTPase family. Mg(2+) serves as cofactor.

It catalyses the reaction dUTP + H2O = dUMP + diphosphate + H(+). It participates in pyrimidine metabolism; dUMP biosynthesis; dUMP from dCTP (dUTP route): step 2/2. Functionally, this enzyme is involved in nucleotide metabolism: it produces dUMP, the immediate precursor of thymidine nucleotides and it decreases the intracellular concentration of dUTP so that uracil cannot be incorporated into DNA. This is Deoxyuridine 5'-triphosphate nucleotidohydrolase from Photorhabdus laumondii subsp. laumondii (strain DSM 15139 / CIP 105565 / TT01) (Photorhabdus luminescens subsp. laumondii).